A 1648-amino-acid chain; its full sequence is Kinesin-like protein KIF14 (1648 aa).

The segment at 1 to 27 (MSLHSTHNRNNSGDILDIPSSQNSSSL) is disordered. Positions 1–356 (MSLHSTHNRN…AGKDPLKVEN (356 aa)) are required for PRC1-binding. A phosphoserine mark is found at Ser12 and Ser272. The residue at position 277 (Thr277) is a Phosphothreonine. At Ser346 the chain carries Phosphoserine. A required for microtubule-binding with high affinity region spans residues 356-737 (NSQVTVAVRV…AAQRNSRNID (382 aa)). The Kinesin motor domain occupies 358 to 701 (QVTVAVRVRP…LRYANQARLI (344 aa)). 447–454 (GQTGSGKS) serves as a coordination point for ATP. A coiled-coil region spans residues 705–791 (AKVNEDMNAK…QETKELQKAG (87 aa)). Positions 825–891 (TTVGKYKPNS…LRHGDRVILG (67 aa)) constitute an FHA domain. A required for CIT-binding region spans residues 901 to 1648 (PVEVQKGKRP…ECTPSRIQWV (748 aa)). The residue at position 915 (Thr915) is a Phosphothreonine. A coiled-coil region spans residues 922-1079 (KDFEFAKNEL…QNRNNRDKTF (158 aa)). Phosphoserine is present on residues Ser937 and Ser1292. Coiled-coil stretches lie at residues 1332-1348 (TNIARLEDELRQEVKKL) and 1468-1500 (ENIFAESKIKSFRRQVQEENFEYQDFKRMVNRA). A disordered region spans residues 1600 to 1648 (NTKEEHQQSKSSGIDGSKNKGVPKRVYELHGSSPAVSSEECTPSRIQWV). The segment covering 1633 to 1648 (PAVSSEECTPSRIQWV) has biased composition (polar residues).

It belongs to the TRAFAC class myosin-kinesin ATPase superfamily. Kinesin family. In terms of assembly, directly interacts with PRC1 within a complex also containing KIF4A, KIF20A and KIF23; targets to the central spindle. Directly interacts with CIT depending on the activation state of the kinase (stronger interaction with the kinase-dead form); targets to the midbody. Interacts with ARRB2; the interaction is detected in the nucleus upon OR1D2 stimulation. Interacts with AKT1; the interaction is detected in the plasma membrane upon INS stimulation and promotes AKT1 phosphorylation. Interacts with SVIL; at midbody during cytokinesis. Interacts with RADIL (via PDZ domain); recruits RADIL to the microtubule network restricting RADIL from interaction with activated RAP1A.

It is found in the nucleus. Its subcellular location is the cytoplasm. It localises to the cytoskeleton. The protein localises to the spindle. The protein resides in the midbody. Its function is as follows. Microtubule motor protein that binds to microtubules with high affinity through each tubulin heterodimer and has an ATPase activity. Plays a role in many processes like cell division, cytokinesis and also in cell proliferation and apoptosis. During cytokinesis, targets to central spindle and midbody through its interaction with PRC1 and CIT respectively. Regulates cell growth through regulation of cell cycle progression and cytokinesis. During cell cycle progression acts through SCF-dependent proteasomal ubiquitin-dependent protein catabolic process which controls CDKN1B degradation, resulting in positive regulation of cyclins, including CCNE1, CCND1 and CCNB1. During late neurogenesis, regulates the cerebellar, cerebral cortex and olfactory bulb development through regulation of apoptosis, cell proliferation and cell division. Also is required for chromosome congression and alignment during mitotic cell cycle process. Regulates cell spreading, focal adhesion dynamics, and cell migration through its interaction with RADIL resulting in regulation of RAP1A-mediated inside-out integrin activation by tethering RADIL on microtubules. The chain is Kinesin-like protein KIF14 from Homo sapiens (Human).